The following is a 132-amino-acid chain: Sodium/calcium exchanger regulatory protein 1 (132 aa).

The (9Z)-hexadecenoate site is built by arginine 126 and tyrosine 128.

The protein belongs to the calycin superfamily. Fatty-acid binding protein (FABP) family. Interacts with Na(+)/Ca(2+) exchanger NCXSQ1; ReP1-NCXSQ phosphorylation does not affect the interaction. Phosphorylated. Phosphorylation may result in the release of the bound fatty acid. Expressed in the optic nerve (at protein level).

It localises to the cytoplasm. The protein localises to the membrane. In terms of biological role, binds and may transport fatty acids such as palmitoleate. Also binds poly-phosphoinositides including phosphatidylinositol 4-phosphate (PtdIns(4)P), phosphatidylinositol 4,5-bisphosphate (PtdIns(4,5)P2) and phosphatidylinositol 3,4,5-trisphosphate (PtdIns(3,4,5)P3), and phosphatidic acid. When phosphorylated, stimulates the activity of optic nerve Na(+)/Ca(2+) exchanger. The sequence is that of Sodium/calcium exchanger regulatory protein 1 from Doryteuthis pealeii (Longfin inshore squid).